A 35-amino-acid polypeptide reads, in one-letter code: SKEVMKQMTINFAKPMEACKQELNVPDAVVQDFFN.

The protein belongs to the PBP/GOBP family. In terms of assembly, homodimer. Antenna.

Functionally, this major soluble protein in olfactory sensilla of male moths might serve to solubilize the extremely hydrophobic pheromone molecules and to transport pheromone through the aqueous lymph to receptors located on olfactory cilia. The polypeptide is Pheromone-binding protein 1 (Lymantria dispar (Gypsy moth)).